The following is a 107-amino-acid chain: UPF0122 protein EAT1b_2891 (107 aa).

This sequence belongs to the UPF0122 family.

In terms of biological role, might take part in the signal recognition particle (SRP) pathway. This is inferred from the conservation of its genetic proximity to ftsY/ffh. May be a regulatory protein. The chain is UPF0122 protein EAT1b_2891 from Exiguobacterium sp. (strain ATCC BAA-1283 / AT1b).